Consider the following 126-residue polypeptide: Large ribosomal subunit protein bL19 (126 aa).

It belongs to the bacterial ribosomal protein bL19 family.

Functionally, this protein is located at the 30S-50S ribosomal subunit interface and may play a role in the structure and function of the aminoacyl-tRNA binding site. This chain is Large ribosomal subunit protein bL19, found in Bradyrhizobium diazoefficiens (strain JCM 10833 / BCRC 13528 / IAM 13628 / NBRC 14792 / USDA 110).